Here is a 77-residue protein sequence, read N- to C-terminus: DNA-directed RNA polymerase subunit omega (77 aa).

The protein belongs to the RNA polymerase subunit omega family. In terms of assembly, the RNAP catalytic core consists of 2 alpha, 1 beta, 1 beta' and 1 omega subunit. When a sigma factor is associated with the core the holoenzyme is formed, which can initiate transcription.

The catalysed reaction is RNA(n) + a ribonucleoside 5'-triphosphate = RNA(n+1) + diphosphate. Its function is as follows. Promotes RNA polymerase assembly. Latches the N- and C-terminal regions of the beta' subunit thereby facilitating its interaction with the beta and alpha subunits. This Nitratidesulfovibrio vulgaris (strain ATCC 29579 / DSM 644 / CCUG 34227 / NCIMB 8303 / VKM B-1760 / Hildenborough) (Desulfovibrio vulgaris) protein is DNA-directed RNA polymerase subunit omega.